Reading from the N-terminus, the 442-residue chain is tRNA(Ile)-lysidine synthase (442 aa).

ATP is bound at residue 27 to 32 (SGGLDS).

This sequence belongs to the tRNA(Ile)-lysidine synthase family.

It localises to the cytoplasm. The catalysed reaction is cytidine(34) in tRNA(Ile2) + L-lysine + ATP = lysidine(34) in tRNA(Ile2) + AMP + diphosphate + H(+). Ligates lysine onto the cytidine present at position 34 of the AUA codon-specific tRNA(Ile) that contains the anticodon CAU, in an ATP-dependent manner. Cytidine is converted to lysidine, thus changing the amino acid specificity of the tRNA from methionine to isoleucine. This is tRNA(Ile)-lysidine synthase from Photorhabdus laumondii subsp. laumondii (strain DSM 15139 / CIP 105565 / TT01) (Photorhabdus luminescens subsp. laumondii).